The chain runs to 409 residues: Peptidase T (409 aa).

Histidine 78 lines the Zn(2+) pocket. Aspartate 80 is a catalytic residue. Aspartate 140 contacts Zn(2+). Glutamate 173 (proton acceptor) is an active-site residue. 3 residues coordinate Zn(2+): glutamate 174, aspartate 196, and histidine 379.

This sequence belongs to the peptidase M20B family. Zn(2+) is required as a cofactor.

The protein resides in the cytoplasm. The enzyme catalyses Release of the N-terminal residue from a tripeptide.. In terms of biological role, cleaves the N-terminal amino acid of tripeptides. In Salmonella choleraesuis (strain SC-B67), this protein is Peptidase T.